A 313-amino-acid chain; its full sequence is Beta-ketoacyl-[acyl-carrier-protein] synthase III (313 aa).

Catalysis depends on residues cysteine 112 and histidine 238. An ACP-binding region spans residues 239–243 (QANIR). Asparagine 268 is a catalytic residue.

The protein belongs to the thiolase-like superfamily. FabH family. In terms of assembly, homodimer.

The protein resides in the cytoplasm. It catalyses the reaction malonyl-[ACP] + acetyl-CoA + H(+) = 3-oxobutanoyl-[ACP] + CO2 + CoA. It functions in the pathway lipid metabolism; fatty acid biosynthesis. Catalyzes the condensation reaction of fatty acid synthesis by the addition to an acyl acceptor of two carbons from malonyl-ACP. Catalyzes the first condensation reaction which initiates fatty acid synthesis and may therefore play a role in governing the total rate of fatty acid production. Possesses both acetoacetyl-ACP synthase and acetyl transacylase activities. Its substrate specificity determines the biosynthesis of branched-chain and/or straight-chain of fatty acids. In Staphylococcus haemolyticus (strain JCSC1435), this protein is Beta-ketoacyl-[acyl-carrier-protein] synthase III.